The following is a 232-amino-acid chain: Ribosomal RNA small subunit methyltransferase G (232 aa).

Residues 1–24 form a disordered region; it reads MVDTALHPIPGRRTPPHPRSTLPL. S-adenosyl-L-methionine-binding positions include G91, L96, 142-143, and R160; that span reads AE.

It belongs to the methyltransferase superfamily. RNA methyltransferase RsmG family.

The protein localises to the cytoplasm. Specifically methylates the N7 position of guanine in position 518 of 16S rRNA. The chain is Ribosomal RNA small subunit methyltransferase G from Corynebacterium efficiens (strain DSM 44549 / YS-314 / AJ 12310 / JCM 11189 / NBRC 100395).